The following is a 283-amino-acid chain: Elongation factor Ts (283 aa).

Residues 80–83 (TDFV) are involved in Mg(2+) ion dislocation from EF-Tu.

Belongs to the EF-Ts family.

The protein localises to the cytoplasm. Associates with the EF-Tu.GDP complex and induces the exchange of GDP to GTP. It remains bound to the aminoacyl-tRNA.EF-Tu.GTP complex up to the GTP hydrolysis stage on the ribosome. The chain is Elongation factor Ts from Salmonella paratyphi A (strain ATCC 9150 / SARB42).